The chain runs to 110 residues: Ribonuclease P protein component (110 aa).

It belongs to the RnpA family. Consists of a catalytic RNA component (M1 or rnpB) and a protein subunit.

It catalyses the reaction Endonucleolytic cleavage of RNA, removing 5'-extranucleotides from tRNA precursor.. Its function is as follows. RNaseP catalyzes the removal of the 5'-leader sequence from pre-tRNA to produce the mature 5'-terminus. It can also cleave other RNA substrates such as 4.5S RNA. The protein component plays an auxiliary but essential role in vivo by binding to the 5'-leader sequence and broadening the substrate specificity of the ribozyme. This Mesoplasma florum (strain ATCC 33453 / NBRC 100688 / NCTC 11704 / L1) (Acholeplasma florum) protein is Ribonuclease P protein component.